Reading from the N-terminus, the 265-residue chain is 2-amino-3,7-dideoxy-D-threo-hept-6-ulosonate synthase (265 aa).

Residue Asp-25 is the Proton acceptor of the active site. Residues 25–29 (DHGIT) and 144–146 (YAR) contribute to the 1-deoxy-D-threo-hexo-2,5-diulose 6-phosphate site. The active-site Proton donor is the Tyr-144. Residue Lys-174 is the Schiff-base intermediate with substrate of the active site. Residues 199–200 (GG) and 226–227 (GR) contribute to the 1-deoxy-D-threo-hexo-2,5-diulose 6-phosphate site.

This sequence belongs to the DeoC/FbaB aldolase family. ADHS subfamily. As to quaternary structure, homodecamer.

It catalyses the reaction 1-deoxy-D-threo-hexo-2,5-diulose 6-phosphate + L-aspartate 4-semialdehyde = 2,3-dioxopropyl phosphate + 2-amino-2,3,7-trideoxy-D-lyxo-hept-6-ulosonate. Catalyzes a transaldol reaction between 6-deoxy-5-ketofructose 1-phosphate (DKFP) and L-aspartate semialdehyde (ASA) with an elimination of hydroxypyruvaldehyde phosphate to yield 2-amino-3,7-dideoxy-D-threo-hept-6-ulosonate (ADH). Plays a key role in an alternative pathway of the biosynthesis of 3-dehydroquinate (DHQ), which is involved in the canonical pathway for the biosynthesis of aromatic amino acids. This Halobacterium salinarum (strain ATCC 700922 / JCM 11081 / NRC-1) (Halobacterium halobium) protein is 2-amino-3,7-dideoxy-D-threo-hept-6-ulosonate synthase.